The primary structure comprises 213 residues: ATP phosphoribosyltransferase (213 aa).

It belongs to the ATP phosphoribosyltransferase family. Short subfamily. In terms of assembly, heteromultimer composed of HisG and HisZ subunits.

It is found in the cytoplasm. The catalysed reaction is 1-(5-phospho-beta-D-ribosyl)-ATP + diphosphate = 5-phospho-alpha-D-ribose 1-diphosphate + ATP. The protein operates within amino-acid biosynthesis; L-histidine biosynthesis; L-histidine from 5-phospho-alpha-D-ribose 1-diphosphate: step 1/9. Catalyzes the condensation of ATP and 5-phosphoribose 1-diphosphate to form N'-(5'-phosphoribosyl)-ATP (PR-ATP). Has a crucial role in the pathway because the rate of histidine biosynthesis seems to be controlled primarily by regulation of HisG enzymatic activity. This is ATP phosphoribosyltransferase from Listeria monocytogenes serotype 4b (strain F2365).